We begin with the raw amino-acid sequence, 150 residues long: Monothiol glutaredoxin-S13 (150 aa).

The segment at 30–52 is disordered; the sequence is PSSSSSSLSWLTSGSPKPTSISN. The segment covering 31 to 44 has biased composition (low complexity); the sequence is SSSSSSLSWLTSGS. In terms of domain architecture, Glutaredoxin spans 53-149; that stretch reads KRSSNLVVME…PTLRQAGALW (97 aa). [2Fe-2S] cluster is bound at residue Cys-73. A Responsive for interaction with TGA factors motif is present at residues 147-150; sequence ALWL.

Belongs to the glutaredoxin family. CC-type subfamily.

The protein localises to the cytoplasm. It localises to the nucleus. May only reduce GSH-thiol disulfides, but not protein disulfides. The sequence is that of Monothiol glutaredoxin-S13 (GRXS13) from Arabidopsis thaliana (Mouse-ear cress).